The following is a 367-amino-acid chain: C-glycoside deglycosidase alpha subunit (367 aa).

Glu146 contacts Mg(2+). The active-site Proton acceptor is His148. Residues Asp178, His276, and Glu312 each coordinate Mg(2+).

This sequence belongs to the C-glycoside deglycosidase alpha subunit family. As to quaternary structure, heterodimer composed of an alpha subunit (CarB1) and a beta subunit (CarC1). The cofactor is Mg(2+).

The catalysed reaction is 3''-dehydroisovitexin = 1,5-anhydro-D-erythro-hex-1-en-3-ulose + apigenin. Its activity is regulated as follows. Activity is strongly reduced in the presence of chelating agents. Carbon-carbon bond-cleaving enzyme which participates in the metabolism of C-glycosides. Acts on the C6-glycosylated compound 3''-dehydroisovitexin (3''-oxo-isovitexin). Shows weak activity with 3''-dehydroisoorientin (3''-oxo-homoorientin) and 3'-dehydromangiferin (3'-oxo-mangiferin). The sequence is that of C-glycoside deglycosidase alpha subunit from Arthrobacter globiformis (strain ATCC 8010 / DSM 20124 / JCM 1332 / NBRC 12137 / NCIMB 8907 / NRRL B-2979 / 168).